The sequence spans 518 residues: Phosphoacetylglucosamine mutase 1 (518 aa).

Thr49 carries the post-translational modification Phosphothreonine. Catalysis depends on Ser51, which acts as the Phosphoserine intermediate. Ser51, Asp267, Asp269, and Asp271 together coordinate Mg(2+). Ser51 is modified (phosphoserine). Residues Glu360–Asn362, Arg486–Thr490, and Arg495 each bind substrate.

This sequence belongs to the phosphohexose mutase family. Mg(2+) serves as cofactor.

The protein resides in the cytoplasm. Its subcellular location is the nucleus. It catalyses the reaction N-acetyl-alpha-D-glucosamine 1-phosphate = N-acetyl-D-glucosamine 6-phosphate. It participates in nucleotide-sugar biosynthesis; UDP-N-acetyl-alpha-D-glucosamine biosynthesis; N-acetyl-alpha-D-glucosamine 1-phosphate from alpha-D-glucosamine 6-phosphate (route I): step 2/2. Its function is as follows. Catalyzes the conversion of GlcNAc-6-P into GlcNAc-1-P during the synthesis of uridine diphosphate/UDP-GlcNAc, which is a biosynthetic precursor of chitin and also supplies the amino sugars for N-linked oligosaccharides of glycoproteins. The sequence is that of Phosphoacetylglucosamine mutase 1 from Schizosaccharomyces pombe (strain 972 / ATCC 24843) (Fission yeast).